The chain runs to 569 residues: Urease subunit alpha (569 aa).

One can recognise a Urease domain in the interval 131–569 (GGIDAHIHWI…LPLAQRYFLF (439 aa)). 3 residues coordinate Ni(2+): H136, H138, and K219. K219 carries the post-translational modification N6-carboxylysine. H221 contributes to the substrate binding site. Ni(2+) contacts are provided by H248 and H274. H322 serves as the catalytic Proton donor. D362 is a binding site for Ni(2+).

The protein belongs to the metallo-dependent hydrolases superfamily. Urease alpha subunit family. As to quaternary structure, heterotrimer of UreA (gamma), UreB (beta) and UreC (alpha) subunits. Three heterotrimers associate to form the active enzyme. The cofactor is Ni cation. Post-translationally, carboxylation allows a single lysine to coordinate two nickel ions.

Its subcellular location is the cytoplasm. It carries out the reaction urea + 2 H2O + H(+) = hydrogencarbonate + 2 NH4(+). The protein operates within nitrogen metabolism; urea degradation; CO(2) and NH(3) from urea (urease route): step 1/1. The chain is Urease subunit alpha from Magnetococcus marinus (strain ATCC BAA-1437 / JCM 17883 / MC-1).